A 175-amino-acid chain; its full sequence is Large ribosomal subunit protein uL10 (175 aa).

Belongs to the universal ribosomal protein uL10 family. As to quaternary structure, part of the ribosomal stalk of the 50S ribosomal subunit. The N-terminus interacts with L11 and the large rRNA to form the base of the stalk. The C-terminus forms an elongated spine to which L12 dimers bind in a sequential fashion forming a multimeric L10(L12)X complex.

Forms part of the ribosomal stalk, playing a central role in the interaction of the ribosome with GTP-bound translation factors. This Synechococcus sp. (strain CC9605) protein is Large ribosomal subunit protein uL10.